The chain runs to 202 residues: MLKEIRPAIFVLLALTLITGLLYPLAMTGLAVTIFPAQAAGSLITRNGQVIGSALIGQEFKDDRYFHGRPSATSTADPNDSTKTVPAPYNAANSSGSNLGPTSKALADRVKEDVDKLKAENPAQPVPVDLVTTSASGLDPHVSPEAAMFQVPRVAKARGVPEDRVRALVVKNTEGRLIGLLGEPRVNVLALNLALDAATATK.

Residues 7-27 (PAIFVLLALTLITGLLYPLAM) form a helical membrane-spanning segment. The interval 66–103 (FHGRPSATSTADPNDSTKTVPAPYNAANSSGSNLGPTS) is disordered. 2 stretches are compositionally biased toward polar residues: residues 71-84 (SATS…STKT) and 91-101 (AANSSGSNLGP).

It belongs to the KdpC family. In terms of assembly, the system is composed of three essential subunits: KdpA, KdpB and KdpC.

It is found in the cell inner membrane. Functionally, part of the high-affinity ATP-driven potassium transport (or Kdp) system, which catalyzes the hydrolysis of ATP coupled with the electrogenic transport of potassium into the cytoplasm. This subunit acts as a catalytic chaperone that increases the ATP-binding affinity of the ATP-hydrolyzing subunit KdpB by the formation of a transient KdpB/KdpC/ATP ternary complex. The protein is Potassium-transporting ATPase KdpC subunit of Bradyrhizobium sp. (strain ORS 278).